The following is a 534-amino-acid chain: Cytokinin dehydrogenase 1 (534 aa).

The signal sequence occupies residues 1–18; the sequence is MAVVYYLLLAGLIACSHA. N52, N63, and N89 each carry an N-linked (GlcNAc...) asparagine glycan. The 181-residue stretch at 65–245 folds into the FAD-binding PCMH-type domain; the sequence is TSALPAAVLY…TRARIAVEPA (181 aa). F100, G102, R103, and G104 together coordinate FAD. Pros-8alpha-FAD histidine is present on H105. Residues S106 and Q110 each coordinate FAD. N134 carries an N-linked (GlcNAc...) asparagine glycan. 5 residues coordinate FAD: D169, T174, S180, I184, and I235. D169 contacts N(6)-dimethylallyladenine. D169 contributes to the trans-zeatin binding site. Residues N294, N323, and N338 are each glycosylated (N-linked (GlcNAc...) asparagine). A N(6)-dimethylallyladenine-binding site is contributed by E381. Residue E381 coordinates trans-zeatin. Residue N434 is glycosylated (N-linked (GlcNAc...) asparagine). S456 is a binding site for trans-zeatin. Y491, S527, and Q530 together coordinate FAD.

The protein belongs to the oxygen-dependent FAD-linked oxidoreductase family. In terms of assembly, monomer. FAD serves as cofactor. In terms of processing, glycosylated; with approximately 10 hexose residues per site. As to expression, expressed in immature kernels and unpollinated cobs. Weakly expressed in kernels harvested two weeks after anthesis.

Its subcellular location is the secreted. The protein resides in the extracellular space. It catalyses the reaction N(6)-dimethylallyladenine + A + H2O = 3-methyl-2-butenal + adenine + AH2. Competitive inhibition by phenylureas. Catalyzes the oxidation of cytokinins, a family of N(6)-substituted adenine derivatives that are plant hormones, where the substituent is an isopentenyl group. Cleaves trans-zeatin, N(6)-dimethylallyladenine (isopentenyladenine), isopentenyladenosine, zeatin riboside and cis-zeatin, but not dihydrozeatin, kinetin and benzylaminopurine. In Zea mays (Maize), this protein is Cytokinin dehydrogenase 1 (CKX1).